Reading from the N-terminus, the 394-residue chain is 1-deoxy-D-xylulose 5-phosphate reductoisomerase (394 aa).

The NADPH site is built by T12, G13, S14, I15, G38, N41, and N132. Residue K133 coordinates 1-deoxy-D-xylulose 5-phosphate. E134 serves as a coordination point for NADPH. D156 contributes to the Mn(2+) binding site. 1-deoxy-D-xylulose 5-phosphate contacts are provided by S157, E158, S182, and H205. E158 contacts Mn(2+). Position 211 (G211) interacts with NADPH. 1-deoxy-D-xylulose 5-phosphate-binding residues include S218, N223, K224, and E227. E227 contributes to the Mn(2+) binding site.

Belongs to the DXR family. The cofactor is Mg(2+). Mn(2+) serves as cofactor.

It catalyses the reaction 2-C-methyl-D-erythritol 4-phosphate + NADP(+) = 1-deoxy-D-xylulose 5-phosphate + NADPH + H(+). Its pathway is isoprenoid biosynthesis; isopentenyl diphosphate biosynthesis via DXP pathway; isopentenyl diphosphate from 1-deoxy-D-xylulose 5-phosphate: step 1/6. Its function is as follows. Catalyzes the NADPH-dependent rearrangement and reduction of 1-deoxy-D-xylulose-5-phosphate (DXP) to 2-C-methyl-D-erythritol 4-phosphate (MEP). The protein is 1-deoxy-D-xylulose 5-phosphate reductoisomerase of Arthrobacter sp. (strain FB24).